The sequence spans 304 residues: Ornithine carbamoyltransferase (304 aa).

Residues 53 to 56 (STRT), Q80, R104, and 131 to 134 (HPCQ) contribute to the carbamoyl phosphate site. L-ornithine-binding positions include N162, D219, and 223–224 (SM). Residues 259 to 260 (CL) and R287 each bind carbamoyl phosphate.

Belongs to the aspartate/ornithine carbamoyltransferase superfamily. OTCase family.

The protein resides in the cytoplasm. It catalyses the reaction carbamoyl phosphate + L-ornithine = L-citrulline + phosphate + H(+). Its pathway is amino-acid biosynthesis; L-arginine biosynthesis; L-arginine from L-ornithine and carbamoyl phosphate: step 1/3. In terms of biological role, reversibly catalyzes the transfer of the carbamoyl group from carbamoyl phosphate (CP) to the N(epsilon) atom of ornithine (ORN) to produce L-citrulline. In Herminiimonas arsenicoxydans, this protein is Ornithine carbamoyltransferase.